The sequence spans 287 residues: 4-hydroxybenzoate octaprenyltransferase (287 aa).

7 consecutive transmembrane segments (helical) span residues 30-50, 92-112, 133-153, 158-178, 207-227, 232-252, and 266-286; these read ALWIASDGHPAPSLVAIFALG, IAIAVGLALVSFLLILPLNGL, FFAIPQAYLGIAFGFGIPMAF, DTVPMIAWAMLAANVFWSVAY, VLAIMLCYAAMLGIYVWLGAA, WPYWAGWAAAAGCSIYHYTLI, and HNNWLGGVLFAGIAAHYALAV.

Belongs to the UbiA prenyltransferase family. It depends on Mg(2+) as a cofactor.

It localises to the cell inner membrane. It carries out the reaction all-trans-octaprenyl diphosphate + 4-hydroxybenzoate = 4-hydroxy-3-(all-trans-octaprenyl)benzoate + diphosphate. The protein operates within cofactor biosynthesis; ubiquinone biosynthesis. Functionally, catalyzes the prenylation of para-hydroxybenzoate (PHB) with an all-trans polyprenyl group. Mediates the second step in the final reaction sequence of ubiquinone-8 (UQ-8) biosynthesis, which is the condensation of the polyisoprenoid side chain with PHB, generating the first membrane-bound Q intermediate 3-octaprenyl-4-hydroxybenzoate. The protein is 4-hydroxybenzoate octaprenyltransferase of Burkholderia pseudomallei (strain 1106a).